Consider the following 132-residue polypeptide: Small ribosomal subunit protein uS8 (132 aa).

This sequence belongs to the universal ribosomal protein uS8 family. In terms of assembly, part of the 30S ribosomal subunit. Contacts proteins S5 and S12.

In terms of biological role, one of the primary rRNA binding proteins, it binds directly to 16S rRNA central domain where it helps coordinate assembly of the platform of the 30S subunit. The protein is Small ribosomal subunit protein uS8 of Limosilactobacillus fermentum (strain NBRC 3956 / LMG 18251) (Lactobacillus fermentum).